Consider the following 432-residue polypeptide: Adenylosuccinate synthetase (432 aa).

GTP contacts are provided by residues 12-18 (GDEGKGK) and 40-42 (GHT). Asp13 functions as the Proton acceptor in the catalytic mechanism. Residues Asp13 and Gly40 each coordinate Mg(2+). IMP contacts are provided by residues 13–16 (DEGK), 38–41 (NAGH), Thr128, Arg142, Gln223, Thr238, and Arg302. Residue His41 is the Proton donor of the active site. 298–304 (TTTGRPR) serves as a coordination point for substrate. GTP is bound by residues Arg304, 330–332 (HLD), and 417–419 (GVG).

Belongs to the adenylosuccinate synthetase family. In terms of assembly, homodimer. Mg(2+) is required as a cofactor.

Its subcellular location is the cytoplasm. The enzyme catalyses IMP + L-aspartate + GTP = N(6)-(1,2-dicarboxyethyl)-AMP + GDP + phosphate + 2 H(+). The protein operates within purine metabolism; AMP biosynthesis via de novo pathway; AMP from IMP: step 1/2. In terms of biological role, plays an important role in the de novo pathway of purine nucleotide biosynthesis. Catalyzes the first committed step in the biosynthesis of AMP from IMP. This is Adenylosuccinate synthetase from Symbiobacterium thermophilum (strain DSM 24528 / JCM 14929 / IAM 14863 / T).